The chain runs to 142 residues: Metallothiol transferase FosB (142 aa).

Residues S5–G120 form the VOC domain. Mg(2+)-binding residues include H8, H67, and E116. The Proton donor/acceptor role is filled by E116.

Belongs to the fosfomycin resistance protein family. FosB subfamily. Homodimer. The cofactor is Mg(2+).

It is found in the cytoplasm. Its function is as follows. Metallothiol transferase which confers resistance to fosfomycin by catalyzing the addition of a thiol cofactor to fosfomycin. L-cysteine is probably the physiological thiol donor. The protein is Metallothiol transferase FosB of Staphylococcus epidermidis (strain ATCC 12228 / FDA PCI 1200).